The primary structure comprises 849 residues: MEDPVIRIPPYHYIHVLDLNSNVTRVEVGPHSFIRQDHERVVFSPKRMVMVPPRHYCVVLNPVARGPTGAVLFDGAGQAQLRHADLDIRLTQEPFPLYPGEELQQGVTPLQVVLADTALRLRALLDFEDEDGNKFVAGDEWLFEGPGTYIPHKEVEVVETLQATIIRHNQAIRLRARKECLDRQGTRRVTGEEWLVKRVGAYLPGVYEEVVDVVDAYVLTDKKALHLRATRTFEDVQGHVRRTGEEWLVTQEQSEAYVPDVFEEVVAEVLVTTLGPRQYCVVLDPVGPNGQPQLGQQRVVKGEKSFFLQPGERLQAGIQDVYVLSEDEGLLLQALQTIKDTDEDGTEVIRRAGDRWLARGPLEYVPPAEVTVLERRQALALAENEGIYVRDIRTGKVRVVTGQTYMLTESEELWEKELPPGVEVLLAEARGDTAGQDSGIQSSSGPSFGVQERDRTRAVTYQVPHNAAVQVYDYRERRARVVLGPELVVLGPGEQLTVLSLSGGRPKRPHARRSLCLRLGPDFCADIVTIETADHARLQLQLAYNWHFEVPEDPKALGRLFSVPDFVGDACKALASRVRGAVAAVTFDDFHKNSNRLICSAVFGFDEGGRLREHLRFVPNGLVVTSVDIQSVEPVDQRTRDALQRSVQLAIEIATNSQEAAARHEAERLAQEARVRLERQRLLDQAEAERARRELLELEALSAAVESAGAARAEAQARAEAARIEAEAAILQAKLKAEAVAIETEAELARLERMQAQEVRAQRARAEAEAARAQALAAVEASKVREVAAALGPETIRDIARAGPELQVKLLQGLGLQSALITDGAAPLNLFSTARGLLGLAVPPEPSTS.

9 MVP repeats span residues 2 to 54 (EDPV…VPPR), 55 to 109 (HYCV…GVTP), 110 to 162 (LQVV…ETLQ), 163 to 215 (ATII…DVVD), 216 to 270 (AYVL…AEVL), 271 to 321 (VTTL…IQDV), 322 to 378 (YVLS…RRQA), 379 to 458 (LALA…RTRA), and 459 to 521 (VTYQ…RLGP).

The vault ribonucleoprotein particle is a huge (400 A x 670 A) cage structure of 12.9 MDa. It consists of a dimer of half-vaults, with each half-vault comprising 39 identical major vault protein (MVP) chains, PARP4 and one or more vault RNAs (vRNAs).

Its subcellular location is the cytoplasm. It is found in the nucleus. Required for normal vault structure. Vaults are multi-subunit structures that may act as scaffolds for proteins involved in signal transduction. Vaults may also play a role in nucleo-cytoplasmic transport. This chain is Major vault protein (MVP), found in Gallus gallus (Chicken).